We begin with the raw amino-acid sequence, 265 residues long: uncharacterized protein (265 aa).

The N-terminal stretch at 1-23 (MNYFRILYCSVLLFFSFFSCTSA) is a signal peptide. The region spanning 67-248 (KEIYLTFDNG…TLKQQGYTFK (182 aa)) is the NodB homology domain.

Belongs to the polysaccharide deacetylase family.

This is an uncharacterized protein from Geobacillus stearothermophilus (Bacillus stearothermophilus).